Here is a 491-residue protein sequence, read N- to C-terminus: Peptidyl-prolyl isomerase CWC27 (491 aa).

In terms of domain architecture, PPIase cyclophilin-type spans 11–167; the sequence is TNGKVIIDTT…IPPKIRRIHI (157 aa). Composition is skewed to basic and acidic residues over residues 186–202, 268–298, and 306–316; these read AQQK…EQRE, DLGK…REKA, and AEIKRMEEDLR. 2 disordered regions span residues 186-427 and 464-491; these read AQQK…IEVD and RDLL…GRNR. Residues 277–327 are a coiled coil; it reads ASEEKKAVDLKNIRAQHEREKAGGSAARQAEIKRMEEDLRRLKKRSGSVSD. A compositionally biased stretch (low complexity) spans 323–333; that stretch reads GSVSDSESDSS. Over residues 352–367 the composition is skewed to basic residues; the sequence is ASKRGRAAMKAGNKRG. 2 stretches are compositionally biased toward acidic residues: residues 391–406 and 418–427; these read DEPE…EGEA and AEEEGGIEVD. The segment covering 482-491 has biased composition (basic residues); that stretch reads RTVRNSGRNR.

It belongs to the cyclophilin-type PPIase family. CWC27 subfamily. In terms of assembly, associated with the spliceosome.

The protein resides in the cytoplasm. It is found in the nucleus. It catalyses the reaction [protein]-peptidylproline (omega=180) = [protein]-peptidylproline (omega=0). Functionally, PPIases accelerate the folding of proteins. It catalyzes the cis-trans isomerization of proline imidic peptide bonds in oligopeptides. Involved in pre-mRNA splicing. The chain is Peptidyl-prolyl isomerase CWC27 (CWC27) from Cryptococcus neoformans var. neoformans serotype D (strain B-3501A) (Filobasidiella neoformans).